The primary structure comprises 132 residues: MARVTVEDCIDKVDNRFELVLLAGHRARQISQGAQITVDRDNDKNPVVALREIAEETLSPADLKEDLIHSLQKHVEVDEPEMASEFITHSSESESIFNTSSQEEGTSFDHMSEEELLAGIEGLVVPEKSDDY.

The segment at 89 to 109 (HSSESESIFNTSSQEEGTSFD) is disordered. Over residues 96–105 (IFNTSSQEEG) the composition is skewed to polar residues.

The protein belongs to the RNA polymerase subunit omega family. The RNAP catalytic core consists of 2 alpha, 1 beta, 1 beta' and 1 omega subunit. When a sigma factor is associated with the core the holoenzyme is formed, which can initiate transcription.

It carries out the reaction RNA(n) + a ribonucleoside 5'-triphosphate = RNA(n+1) + diphosphate. Functionally, promotes RNA polymerase assembly. Latches the N- and C-terminal regions of the beta' subunit thereby facilitating its interaction with the beta and alpha subunits. The sequence is that of DNA-directed RNA polymerase subunit omega from Bartonella tribocorum (strain CIP 105476 / IBS 506).